A 450-amino-acid polypeptide reads, in one-letter code: Tubulin beta-3 chain (450 aa).

An MREI motif motif is present at residues 1–4 (MREI). Residues glutamine 11, glutamate 69, serine 138, glycine 142, threonine 143, and glycine 144 each contribute to the GTP site. Glutamate 69 is a Mg(2+) binding site. Phosphoserine; by CDK1 is present on serine 172. Asparagine 204 and asparagine 226 together coordinate GTP. A disordered region spans residues 422–450 (YQQYQDATAEEEGEMYEDDDEESEAQGPK). Positions 429–450 (TAEEEGEMYEDDDEESEAQGPK) are enriched in acidic residues. Glutamate 438 carries the 5-glutamyl polyglutamate modification. Phosphoserine is present on serine 444.

It belongs to the tubulin family. Heterodimer of alpha- and beta-tubulin. A typical microtubule is a hollow water-filled tube with an outer diameter of 25 nm and an inner diameter of 15 nM. Alpha-beta heterodimers associate head-to-tail to form protofilaments running lengthwise along the microtubule wall with the beta-tubulin subunit facing the microtubule plus end conferring a structural polarity. Microtubules usually have 13 protofilaments but different protofilament numbers can be found in some organisms and specialized cells. Interacts with gamma-tubulin; the interaction allows microtubules to nucleate from the gamma-tubulin ring complex (gTuRC). Interacts with UNC5C (via cytoplasmic domain); this interaction is decreased by NTN1/Netrin-1. Interacts with NLRP5/MATER at cytoskeleton microtubules. Interacts with DPYSL5. Interacts with CFAP61. It depends on Mg(2+) as a cofactor. Post-translationally, some glutamate residues at the C-terminus are polyglycylated, resulting in polyglycine chains on the gamma-carboxyl group. Glycylation is mainly limited to tubulin incorporated into axonemes (cilia and flagella) whereas glutamylation is prevalent in neuronal cells, centrioles, axonemes, and the mitotic spindle. Both modifications can coexist on the same protein on adjacent residues, and lowering polyglycylation levels increases polyglutamylation, and reciprocally. Cilia and flagella glycylation is required for their stability and maintenance. Flagella glycylation controls sperm motility. Some glutamate residues at the C-terminus are polyglutamylated, resulting in polyglutamate chains on the gamma-carboxyl group. Polyglutamylation plays a key role in microtubule severing by spastin (SPAST). SPAST preferentially recognizes and acts on microtubules decorated with short polyglutamate tails: severing activity by SPAST increases as the number of glutamates per tubulin rises from one to eight, but decreases beyond this glutamylation threshold. Glutamylation is also involved in cilia motility. In terms of processing, phosphorylated on Ser-172 by CDK1 during the cell cycle, from metaphase to telophase, but not in interphase. This phosphorylation inhibits tubulin incorporation into microtubules.

The protein localises to the cytoplasm. The protein resides in the cytoskeleton. It is found in the cell projection. Its subcellular location is the growth cone. It localises to the lamellipodium. The protein localises to the filopodium. Tubulin is the major constituent of microtubules, protein filaments consisting of alpha- and beta-tubulin heterodimers. Microtubules grow by the addition of GTP-tubulin dimers to the microtubule end, where a stabilizing cap forms. Below the cap, alpha-beta tubulin heterodimers are in GDP-bound state, owing to GTPase activity of alpha-tubulin. TUBB3 plays a critical role in proper axon guidance and maintenance. Binding of NTN1/Netrin-1 to its receptor UNC5C might cause dissociation of UNC5C from polymerized TUBB3 in microtubules and thereby lead to increased microtubule dynamics and axon repulsion. Plays a role in dorsal root ganglion axon projection towards the spinal cord. The protein is Tubulin beta-3 chain (Tubb3) of Rattus norvegicus (Rat).